Reading from the N-terminus, the 260-residue chain is Snake venom serine protease homolog 2 (260 aa).

An N-terminal signal peptide occupies residues 1–18; sequence MVLIRVLANLLVLQLSYA. Residues 19-24 constitute a propeptide that is removed on maturation; that stretch reads QKSSEL. Positions 25 to 251 constitute a Peptidase S1 domain; sequence VIGGDECNIN…YTDWIQSIIA (227 aa). 6 disulfides stabilise this stretch: Cys31–Cys165, Cys52–Cys68, Cys100–Cys258, Cys144–Cys212, Cys176–Cys191, and Cys202–Cys227. An N-linked (GlcNAc...) asparagine glycan is attached at Asn123. N-linked (GlcNAc...) asparagine glycosylation is present at Asn253.

This sequence belongs to the peptidase S1 family. Snake venom subfamily. Expressed by the venom gland.

The protein localises to the secreted. Its function is as follows. Snake venom serine protease homolog that may act in the hemostasis system of the prey. This Macrovipera lebetinus (Levantine viper) protein is Snake venom serine protease homolog 2.